A 548-amino-acid chain; its full sequence is 5-epi-aristolochene synthase 3 (548 aa).

Residues D301, D305, D444, T448, and E452 each contribute to the Mg(2+) site. The DDXXD motif signature appears at D301 to D305.

This sequence belongs to the terpene synthase family. As to quaternary structure, monomer. The cofactor is Mg(2+). Expressed in roots, but not in shoots.

It is found in the cytoplasm. It carries out the reaction (2E,6E)-farnesyl diphosphate = (+)-5-epi-aristolochene + diphosphate. Its pathway is secondary metabolite biosynthesis; terpenoid biosynthesis. Catalyzes the cyclization of trans,trans-farnesyl diphosphate (FPP) to the bicyclic intermediate 5-epi-aristolochene, initial step in the conversion of FPP to the sesquiterpenoid antifungal phytoalexin capsidiol. Produces germacrene A as an enzyme-bound intermediate that is not released by the enzyme, but is further cyclized to produce the bicyclic 5-epi-aristolochene. This chain is 5-epi-aristolochene synthase 3, found in Nicotiana attenuata (Coyote tobacco).